A 522-amino-acid polypeptide reads, in one-letter code: 2-isopropylmalate synthase (522 aa).

The 263-residue stretch at 5–267 (VIIFDTTLRD…HTRINHQEIY (263 aa)) folds into the Pyruvate carboxyltransferase domain. Residues Asp-14, His-202, His-204, and Asn-238 each coordinate Mn(2+). A regulatory domain region spans residues 392–522 (RLDTFNVQSG…SQVKDQKETV (131 aa)).

It belongs to the alpha-IPM synthase/homocitrate synthase family. LeuA type 1 subfamily. As to quaternary structure, homodimer. Mn(2+) serves as cofactor.

The protein localises to the cytoplasm. It catalyses the reaction 3-methyl-2-oxobutanoate + acetyl-CoA + H2O = (2S)-2-isopropylmalate + CoA + H(+). It functions in the pathway amino-acid biosynthesis; L-leucine biosynthesis; L-leucine from 3-methyl-2-oxobutanoate: step 1/4. Its function is as follows. Catalyzes the condensation of the acetyl group of acetyl-CoA with 3-methyl-2-oxobutanoate (2-ketoisovalerate) to form 3-carboxy-3-hydroxy-4-methylpentanoate (2-isopropylmalate). The polypeptide is 2-isopropylmalate synthase (Erwinia tasmaniensis (strain DSM 17950 / CFBP 7177 / CIP 109463 / NCPPB 4357 / Et1/99)).